The following is a 247-amino-acid chain: 2,3-bisphosphoglycerate-dependent phosphoglycerate mutase (247 aa).

Residues 8–15 (RHGESQWN), 21–22 (TG), R60, 87–90 (ERHY), K98, 114–115 (RR), and 183–184 (GN) contribute to the substrate site. The Tele-phosphohistidine intermediate role is filled by H9. E87 serves as the catalytic Proton donor/acceptor.

The protein belongs to the phosphoglycerate mutase family. BPG-dependent PGAM subfamily.

It carries out the reaction (2R)-2-phosphoglycerate = (2R)-3-phosphoglycerate. It participates in carbohydrate degradation; glycolysis; pyruvate from D-glyceraldehyde 3-phosphate: step 3/5. Its function is as follows. Catalyzes the interconversion of 2-phosphoglycerate and 3-phosphoglycerate. The polypeptide is 2,3-bisphosphoglycerate-dependent phosphoglycerate mutase (Chlorobium chlorochromatii (strain CaD3)).